We begin with the raw amino-acid sequence, 307 residues long: Heparan sulfate glucosamine 3-O-sulfotransferase 1 (307 aa).

A signal peptide spans 1 to 20 (MAALLLGAVLLVAQPQLVPS). Asn48 carries N-linked (GlcNAc...) asparagine glycosylation. 3'-phosphoadenylyl sulfate contacts are provided by residues 64-68 (KGGTR), Arg147, and Ser155. Asn192, Asn242, and Asn249 each carry an N-linked (GlcNAc...) asparagine glycan. 3'-phosphoadenylyl sulfate is bound at residue Tyr255. A disulfide bridge connects residues Cys256 and Cys265. Residue 270 to 274 (KGRAH) participates in 3'-phosphoadenylyl sulfate binding.

It belongs to the sulfotransferase 1 family. As to expression, highly expressed in the brain and kidney and weakly expressed in the heart, lung and placenta.

The protein localises to the golgi apparatus lumen. It carries out the reaction alpha-D-glucosaminyl-[heparan sulfate](n) + 3'-phosphoadenylyl sulfate = 3-sulfo-alpha-D-glucosaminyl-[heparan sulfate](n) + adenosine 3',5'-bisphosphate + H(+). Functionally, sulfotransferase that utilizes 3'-phospho-5'-adenylyl sulfate (PAPS) to catalyze the transfer of a sulfo group to position 3 of glucosamine residues in heparan. Catalyzes the rate limiting step in the biosynthesis of heparan sulfate (HSact). This modification is a crucial step in the biosynthesis of anticoagulant heparan sulfate as it completes the structure of the antithrombin pentasaccharide binding site. The sequence is that of Heparan sulfate glucosamine 3-O-sulfotransferase 1 (HS3ST1) from Homo sapiens (Human).